Consider the following 320-residue polypeptide: Transcription factor bHLH34 (320 aa).

Residues 162-213 (SKPGTKACREKLRREKLNDKFMDLSSVLEPGRTPKTDKSAILDDAIRVVNQL) enclose the bHLH domain. The interval 299–320 (WSPLPPADRDTSRDLKNLPPVA) is disordered. Over residues 305–314 (ADRDTSRDLK) the composition is skewed to basic and acidic residues.

Homodimer. Expressed constitutively in roots, leaves, stems, and flowers.

The protein localises to the nucleus. The polypeptide is Transcription factor bHLH34 (BHLH34) (Arabidopsis thaliana (Mouse-ear cress)).